The sequence spans 300 residues: Light-independent protochlorophyllide reductase iron-sulfur ATP-binding protein (300 aa).

ATP is bound by residues 43 to 48 (GIGKST) and K72. S47 is a binding site for Mg(2+). Residues C128 and C162 each contribute to the [4Fe-4S] cluster site. ATP is bound at residue 213-214 (NR).

It belongs to the NifH/BchL/ChlL family. As to quaternary structure, homodimer. Protochlorophyllide reductase is composed of three subunits; ChlL, ChlN and ChlB. [4Fe-4S] cluster serves as cofactor.

The catalysed reaction is chlorophyllide a + oxidized 2[4Fe-4S]-[ferredoxin] + 2 ADP + 2 phosphate = protochlorophyllide a + reduced 2[4Fe-4S]-[ferredoxin] + 2 ATP + 2 H2O. It participates in porphyrin-containing compound metabolism; chlorophyll biosynthesis (light-independent). In terms of biological role, component of the dark-operative protochlorophyllide reductase (DPOR) that uses Mg-ATP and reduced ferredoxin to reduce ring D of protochlorophyllide (Pchlide) to form chlorophyllide a (Chlide). This reaction is light-independent. The L component serves as a unique electron donor to the NB-component of the complex, and binds Mg-ATP. The sequence is that of Light-independent protochlorophyllide reductase iron-sulfur ATP-binding protein from Synechococcus sp. (strain RCC307).